The following is a 198-amino-acid chain: Putative pseudouridine methyltransferase (198 aa).

The S-adenosyl-L-methionine site is built by Met-132 and Cys-186.

This sequence belongs to the methyltransferase superfamily. TrmY family.

Its subcellular location is the cytoplasm. The chain is Putative pseudouridine methyltransferase from Photobacterium profundum (strain SS9).